A 427-amino-acid chain; its full sequence is GPI mannosyltransferase 2 (427 aa).

The next 8 helical transmembrane spans lie at 7-27, 119-139, 164-184, 197-217, 247-267, 318-338, 350-370, and 404-424; these read LTTV…FAPG, ATLL…ALTL, FLLA…GMLL, ITLA…FSVA, AVLF…YMHY, VPNF…TVYF, LVYI…VQII, and LYVN…ACFL.

Belongs to the PIGV family.

The protein localises to the endoplasmic reticulum membrane. The protein operates within glycolipid biosynthesis; glycosylphosphatidylinositol-anchor biosynthesis. Mannosyltransferase involved in glycosylphosphatidylinositol-anchor biosynthesis. Transfers the second mannose to the glycosylphosphatidylinositol during GPI precursor assembly. This chain is GPI mannosyltransferase 2 (GPI18), found in Eremothecium gossypii (strain ATCC 10895 / CBS 109.51 / FGSC 9923 / NRRL Y-1056) (Yeast).